We begin with the raw amino-acid sequence, 249 residues long: tRNA pseudouridine synthase A (249 aa).

The Nucleophile role is filled by Asp53. Tyr111 serves as a coordination point for substrate.

It belongs to the tRNA pseudouridine synthase TruA family. As to quaternary structure, homodimer.

The catalysed reaction is uridine(38/39/40) in tRNA = pseudouridine(38/39/40) in tRNA. Formation of pseudouridine at positions 38, 39 and 40 in the anticodon stem and loop of transfer RNAs. The polypeptide is tRNA pseudouridine synthase A (Streptococcus pneumoniae (strain Taiwan19F-14)).